Here is a 46-residue protein sequence, read N- to C-terminus: Photosystem II reaction center protein K (46 aa).

Residues M1 to A9 constitute a propeptide that is removed on maturation. The chain crosses the membrane as a helical span at residues L25–F45.

Belongs to the PsbK family. As to quaternary structure, PSII is composed of 1 copy each of membrane proteins PsbA, PsbB, PsbC, PsbD, PsbE, PsbF, PsbH, PsbI, PsbJ, PsbK, PsbL, PsbM, PsbT, PsbX, PsbY, PsbZ, Psb30/Ycf12, at least 3 peripheral proteins of the oxygen-evolving complex and a large number of cofactors. It forms dimeric complexes.

It localises to the plastid. The protein localises to the chloroplast thylakoid membrane. Functionally, one of the components of the core complex of photosystem II (PSII). PSII is a light-driven water:plastoquinone oxidoreductase that uses light energy to abstract electrons from H(2)O, generating O(2) and a proton gradient subsequently used for ATP formation. It consists of a core antenna complex that captures photons, and an electron transfer chain that converts photonic excitation into a charge separation. This Stigeoclonium helveticum (Green alga) protein is Photosystem II reaction center protein K.